The chain runs to 495 residues: Prenylcysteine oxidase 1-like (495 aa).

Residues 1–22 (MARAAPLLAVLATVLTTAAAGG) form the signal peptide. 2 N-linked (GlcNAc...) asparagine glycosylation sites follow: Asn-185 and Asn-343.

The protein belongs to the prenylcysteine oxidase family. It depends on FAD as a cofactor.

Its subcellular location is the secreted. Functionally, likely to have oxidoreductase activity. Required in the mevalonate pathway to regulate prenylation and enhances the bactericidal activity of neutrophils. In Mus musculus (Mouse), this protein is Prenylcysteine oxidase 1-like (Pcyox1l).